We begin with the raw amino-acid sequence, 157 residues long: Protein Smg homolog (157 aa).

Belongs to the Smg family.

The sequence is that of Protein Smg homolog from Xanthomonas euvesicatoria pv. vesicatoria (strain 85-10) (Xanthomonas campestris pv. vesicatoria).